A 527-amino-acid chain; its full sequence is Glucose-6-phosphate isomerase (527 aa).

Glutamate 323 functions as the Proton donor in the catalytic mechanism. Active-site residues include histidine 352 and lysine 454.

It belongs to the GPI family.

The protein resides in the cytoplasm. The catalysed reaction is alpha-D-glucose 6-phosphate = beta-D-fructose 6-phosphate. Its pathway is carbohydrate biosynthesis; gluconeogenesis. It participates in carbohydrate degradation; glycolysis; D-glyceraldehyde 3-phosphate and glycerone phosphate from D-glucose: step 2/4. Functionally, catalyzes the reversible isomerization of glucose-6-phosphate to fructose-6-phosphate. This Prochlorococcus marinus (strain MIT 9515) protein is Glucose-6-phosphate isomerase.